The chain runs to 490 residues: ATP synthase subunit beta, chloroplastic (490 aa).

Gly-170–Thr-177 provides a ligand contact to ATP.

The protein belongs to the ATPase alpha/beta chains family. As to quaternary structure, F-type ATPases have 2 components, CF(1) - the catalytic core - and CF(0) - the membrane proton channel. CF(1) has five subunits: alpha(3), beta(3), gamma(1), delta(1), epsilon(1). CF(0) has four main subunits: a(1), b(1), b'(1) and c(9-12).

Its subcellular location is the plastid. It localises to the chloroplast thylakoid membrane. The catalysed reaction is ATP + H2O + 4 H(+)(in) = ADP + phosphate + 5 H(+)(out). Functionally, produces ATP from ADP in the presence of a proton gradient across the membrane. The catalytic sites are hosted primarily by the beta subunits. In Ipomoea obscura (Obscure morning glory), this protein is ATP synthase subunit beta, chloroplastic.